The primary structure comprises 155 residues: Ribosomal RNA large subunit methyltransferase H (155 aa).

S-adenosyl-L-methionine contacts are provided by residues L72, G103, and 122–127 (LSDLTL).

Belongs to the RNA methyltransferase RlmH family. Homodimer.

The protein resides in the cytoplasm. The enzyme catalyses pseudouridine(1915) in 23S rRNA + S-adenosyl-L-methionine = N(3)-methylpseudouridine(1915) in 23S rRNA + S-adenosyl-L-homocysteine + H(+). In terms of biological role, specifically methylates the pseudouridine at position 1915 (m3Psi1915) in 23S rRNA. This chain is Ribosomal RNA large subunit methyltransferase H, found in Acidovorax ebreus (strain TPSY) (Diaphorobacter sp. (strain TPSY)).